Reading from the N-terminus, the 520-residue chain is Nonsense-mediated mRNA decay factor SMG9 (520 aa).

Disordered stretches follow at residues 1-94 (MSES…PAPL) and 107-143 (GKGP…QRPT). At Ser2 the chain carries N-acetylserine. A phosphoserine mark is found at Ser2, Ser4, Ser7, Ser32, and Ser53. Basic and acidic residues predominate over residues 36 to 53 (GRERDYIAPWERERRDGS). Over residues 78–94 (QPPPSTAPAAPPAPAPL) the composition is skewed to pro residues. Residues 112–121 (AATGASTPEG) show a composition bias toward low complexity. Residues 122 to 133 (TAPPPPTAPAPP) show a composition bias toward pro residues. Ser451 is modified (phosphoserine).

Belongs to the SMG9 family. As to quaternary structure, self-associates to form homodimers and forms heterodimers with SMG8; these assembly forms may represent SMG1C intermediate forms. Component of the SMG1C complex composed of SMG1, SMG8 and SMG9. Interacts with DHX34; the interaction is RNA-independent. In terms of processing, phosphorylated by SMG1.

Functionally, involved in nonsense-mediated decay (NMD) of mRNAs containing premature stop codons. Is recruited by release factors to stalled ribosomes together with SMG1 and SMG8 (forming the SMG1C protein kinase complex) and, in the SMG1C complex, is required for the efficient association between SMG1 and SMG8. Plays a role in brain, heart, and eye development. The sequence is that of Nonsense-mediated mRNA decay factor SMG9 from Rattus norvegicus (Rat).